The following is a 344-amino-acid chain: KRR1 small subunit processome component homolog (344 aa).

In terms of domain architecture, KH spans 126–194; it reads DIIKIGNLVH…VRDIVLDTMN (69 aa). Basic residues predominate over residues 230–246; the sequence is KNKNISKRKQPKNKKPK. The disordered stretch occupies residues 230-326; sequence KNKNISKRKQ…KRAAEDNKVD (97 aa). A coiled-coil region spans residues 271 to 344; it reads FLNKEQKQAK…MKANKKKERS (74 aa). Residues 272–303 are compositionally biased toward basic and acidic residues; the sequence is LNKEQKQAKRQQERTAKQAEAAKKQDERRNKD.

It belongs to the KRR1 family. Monomer. Component of the ribosomal small subunit (SSU) processome.

It is found in the nucleus. It localises to the nucleolus. Required for 40S ribosome biogenesis. Involved in nucleolar processing of pre-18S ribosomal RNA and ribosome assembly. Binds to RNA. Required for female germline development, cell viability during eye development and for survival of dividing cells and epithelial cells during early wing disk development. This is KRR1 small subunit processome component homolog from Drosophila mojavensis (Fruit fly).